Reading from the N-terminus, the 283-residue chain is Pantothenate synthetase (283 aa).

An ATP-binding site is contributed by 31–38 (MGALHDGH). His38 acts as the Proton donor in catalysis. Gln62 serves as a coordination point for (R)-pantoate. Gln62 provides a ligand contact to beta-alanine. An ATP-binding site is contributed by 148 to 151 (GKKD). Gln154 is a (R)-pantoate binding site. ATP-binding positions include Ile177 and 185–188 (KSSR).

It belongs to the pantothenate synthetase family. Homodimer.

It localises to the cytoplasm. It carries out the reaction (R)-pantoate + beta-alanine + ATP = (R)-pantothenate + AMP + diphosphate + H(+). It participates in cofactor biosynthesis; (R)-pantothenate biosynthesis; (R)-pantothenate from (R)-pantoate and beta-alanine: step 1/1. In terms of biological role, catalyzes the condensation of pantoate with beta-alanine in an ATP-dependent reaction via a pantoyl-adenylate intermediate. This chain is Pantothenate synthetase, found in Oceanobacillus iheyensis (strain DSM 14371 / CIP 107618 / JCM 11309 / KCTC 3954 / HTE831).